The chain runs to 458 residues: Exodeoxyribonuclease 7 large subunit (458 aa).

Belongs to the XseA family. As to quaternary structure, heterooligomer composed of large and small subunits.

It localises to the cytoplasm. The catalysed reaction is Exonucleolytic cleavage in either 5'- to 3'- or 3'- to 5'-direction to yield nucleoside 5'-phosphates.. In terms of biological role, bidirectionally degrades single-stranded DNA into large acid-insoluble oligonucleotides, which are then degraded further into small acid-soluble oligonucleotides. This chain is Exodeoxyribonuclease 7 large subunit, found in Serratia proteamaculans (strain 568).